Consider the following 376-residue polypeptide: Cell adhesion molecule CEACAM18 (376 aa).

A signal peptide spans 1–30 (MDFSRPSFSPWRWLTLVASLLTCGICQASG). Residues 31–330 (QIFISPDSLL…PLPTVNRELY (300 aa)) lie on the Extracellular side of the membrane. Asparagine 69, asparagine 95, and asparagine 110 each carry an N-linked (GlcNAc...) asparagine glycan. The 86-residue stretch at 229–314 (PDYVSLWTQP…TQLTFYRDVT (86 aa)) folds into the Ig-like C2-type domain. Cysteine 257 and cysteine 298 are joined by a disulfide. Residues 331–351 (IPGPLVIFLILLTSLGGAFVC) form a helical membrane-spanning segment. Over 352 to 376 (RVLVYSLFQSCSRGKTCHKCPWQTN) the chain is Cytoplasmic.

The protein belongs to the immunoglobulin superfamily. CEA family. In terms of tissue distribution, mostly expressed in the small and large intestine and at lower levels also in other organs.

Its subcellular location is the membrane. The sequence is that of Cell adhesion molecule CEACAM18 from Mus musculus (Mouse).